Here is a 207-residue protein sequence, read N- to C-terminus: MFSFLKKPTPEELVKKWKRELRREDRGLDTQLRAIDMQEKKTVRMIKERVKAGDQKSAKTLAKEIVNSRKAKERIYTAKAQMNSVSMQLQSNLAMTKVQGNLAKSTEIMKMMNDLIKLPELNKVMMAMGSEMTKAGIMEEMISDVFDMQGEDLEEEAEMEVNKIMDEILVSGPQVSSAPLETHQQEEVVQEKQEDSELLDRLKALKS.

Positions 174–207 (QVSSAPLETHQQEEVVQEKQEDSELLDRLKALKS) are disordered. Residues 183-207 (HQQEEVVQEKQEDSELLDRLKALKS) are a coiled coil. Positions 183–207 (HQQEEVVQEKQEDSELLDRLKALKS) are enriched in basic and acidic residues.

This sequence belongs to the SNF7 family. As to quaternary structure, probable core component of the endosomal sorting required for transport complex III (ESCRT-III).

It is found in the endosome membrane. Probable core component of the endosomal sorting required for transport complex III (ESCRT-III) which is involved in multivesicular bodies (MVBs) formation and sorting of endosomal cargo proteins into MVBs. MVBs contain intraluminal vesicles (ILVs) that are generated by invagination and scission from the limiting membrane of the endosome and are delivered to lysosomes enabling degradation of membrane proteins. The sequence is that of Charged multivesicular body protein 3 (chmp3) from Dictyostelium discoideum (Social amoeba).